The sequence spans 278 residues: Large ribosomal subunit protein uL2 (278 aa).

2 disordered regions span residues 1–53 (MAIR…TTRH) and 224–278 (VVMN…NKKR). Positions 23 to 33 (EITRSTPEKSL) are enriched in basic and acidic residues. The span at 258–267 (RNPNRYSNNM) shows a compositional bias: polar residues. The segment covering 269-278 (VRRRRPNKKR) has biased composition (basic residues).

This sequence belongs to the universal ribosomal protein uL2 family. Part of the 50S ribosomal subunit. Forms a bridge to the 30S subunit in the 70S ribosome.

Its function is as follows. One of the primary rRNA binding proteins. Required for association of the 30S and 50S subunits to form the 70S ribosome, for tRNA binding and peptide bond formation. It has been suggested to have peptidyltransferase activity; this is somewhat controversial. Makes several contacts with the 16S rRNA in the 70S ribosome. The sequence is that of Large ribosomal subunit protein uL2 from Corynebacterium aurimucosum (strain ATCC 700975 / DSM 44827 / CIP 107346 / CN-1) (Corynebacterium nigricans).